Consider the following 161-residue polypeptide: uncharacterized protein (161 aa).

This sequence to R.leguminosarum PsiB.

This is an uncharacterized protein from Sinorhizobium fredii (strain NBRC 101917 / NGR234).